The chain runs to 217 residues: MAQAMASMTGLSQGVLPSRRADSRTRTAVVIVRASAEGDAVAQAGRRAVIGLVATGIVGGALSQAARAETVKTIKIGAPPPPSGGLPGTLNSDQARDFDLPLKERFYLQPLPPAEAAARVKTSAQDIINLKPLIDKKAWPYVQNDLRLRASYLRYDLKTVIASKPKEEKKSLKELTGKLFSTIDDLDHAAKIKSTPEAEKYFAATKDALGDVLAKLG.

The transit peptide at 1 to 68 (MAQAMASMTG…GGALSQAARA (68 aa)) directs the protein to the chloroplast.

It belongs to the PsbQ family.

The protein localises to the plastid. It localises to the chloroplast thylakoid membrane. The protein is Oxygen-evolving enhancer protein 3-1, chloroplastic (PSBQ1) of Zea mays (Maize).